Consider the following 139-residue polypeptide: MFVKSLVFLTIAVAYASADCLHCICMRESGCKPIGCNMDVGSLSCGYYQIKLPYYEDCGQPTKKSGETTEAAWKRCANDLSCATTCVENYYNRYKSQCAGTGQGACEVMARNHNGGPQGCKHSGTLGYWNGIKSCCGCS.

Residues 1–18 (MFVKSLVFLTIAVAYASA) form the signal peptide. In terms of domain architecture, I-type lysozyme spans 19 to 138 (DCLHCICMRE…WNGIKSCCGC (120 aa)). Disulfide bonds link C20–C106, C23–C138, C25–C31, C36–C45, C58–C86, C76–C82, and C98–C120. E28 acts as the Proton donor in catalysis. Residue D39 is the Nucleophile of the active site. 51–57 (KLPYYED) is a binding site for substrate. Substrate contacts are provided by residues Y90 and 113 to 115 (HNG).

The protein belongs to the glycosyl hydrolase 22 family. Type-I lysozyme subfamily. Expressed in pharynx grinder muscle pm7, isthmus marginal cell mc2 and pharyngeal muscle cell pm5, intestinal cells and at lower levels in coelomocytes and epidermis. Expressed at low levels in intestine.

The protein localises to the late endosome lumen. It is found in the recycling endosome lumen. The protein resides in the lysosome lumen. It localises to the secreted. The catalysed reaction is Hydrolysis of (1-&gt;4)-beta-linkages between N-acetylmuramic acid and N-acetyl-D-glucosamine residues in a peptidoglycan and between N-acetyl-D-glucosamine residues in chitodextrins.. Has bacteriolytic activity against Gram-positive bacteria. Plays a role in defense against bacterial pathogens. Involved in pharyngeal grinder function by enabling proper lysis of ingested bacteria. This Caenorhabditis elegans protein is Invertebrate-type lysozyme 3.